An 84-amino-acid polypeptide reads, in one-letter code: Acyl carrier protein homolog (84 aa).

Positions 4–79 constitute a Carrier domain; it reads HEILLKIKEI…DLVLEVKNLL (76 aa). S39 carries the O-(pantetheine 4'-phosphoryl)serine modification.

In terms of processing, 4'-phosphopantetheine is transferred from CoA to a specific serine of the apo-ACP-like protein.

Its pathway is lipid metabolism; fatty acid biosynthesis. Its function is as follows. Carrier of the growing fatty acid chain in fatty acid biosynthesis. This chain is Acyl carrier protein homolog, found in Mycoplasma genitalium (strain ATCC 33530 / DSM 19775 / NCTC 10195 / G37) (Mycoplasmoides genitalium).